Here is a 633-residue protein sequence, read N- to C-terminus: tRNA uridine 5-carboxymethylaminomethyl modification enzyme MnmG (633 aa).

FAD-binding positions include 15–20, V127, and S182; that span reads GAGHAG. 276-290 is a binding site for NAD(+); sequence GPRYCPSIEDKIVRF. Q373 serves as a coordination point for FAD.

Belongs to the MnmG family. In terms of assembly, homodimer. Heterotetramer of two MnmE and two MnmG subunits. FAD is required as a cofactor.

It is found in the cytoplasm. NAD-binding protein involved in the addition of a carboxymethylaminomethyl (cmnm) group at the wobble position (U34) of certain tRNAs, forming tRNA-cmnm(5)s(2)U34. In Streptococcus thermophilus (strain CNRZ 1066), this protein is tRNA uridine 5-carboxymethylaminomethyl modification enzyme MnmG.